The chain runs to 387 residues: Protein WHAT'S THIS FACTOR 9, mitochondrial (387 aa).

A mitochondrion-targeting transit peptide spans 1–24 (MLSIRRHAKTVASSCTNLTQKRTY). The PORR domain occupies 32–358 (KRDPYFDNIE…KKYIQLMKNS (327 aa)).

Its subcellular location is the mitochondrion. RNA-binding protein involved in group II intron splicing. Binds specific group II introns and promotes their splicing (e.g. rpl2 and ccmFC). The polypeptide is Protein WHAT'S THIS FACTOR 9, mitochondrial (Arabidopsis thaliana (Mouse-ear cress)).